The primary structure comprises 429 residues: Ribosomal RNA small subunit methyltransferase B (429 aa).

Residues 254 to 260, aspartate 277, aspartate 303, and aspartate 322 contribute to the S-adenosyl-L-methionine site; that span reads CAAPGGK. Catalysis depends on cysteine 375, which acts as the Nucleophile.

Belongs to the class I-like SAM-binding methyltransferase superfamily. RsmB/NOP family.

It localises to the cytoplasm. It catalyses the reaction cytidine(967) in 16S rRNA + S-adenosyl-L-methionine = 5-methylcytidine(967) in 16S rRNA + S-adenosyl-L-homocysteine + H(+). Functionally, specifically methylates the cytosine at position 967 (m5C967) of 16S rRNA. In Escherichia coli O7:K1 (strain IAI39 / ExPEC), this protein is Ribosomal RNA small subunit methyltransferase B.